We begin with the raw amino-acid sequence, 243 residues long: tRNA (guanine-N(1)-)-methyltransferase (243 aa).

S-adenosyl-L-methionine is bound by residues Gly108 and 127–132 (LGDFVL).

It belongs to the RNA methyltransferase TrmD family. As to quaternary structure, homodimer.

Its subcellular location is the cytoplasm. The catalysed reaction is guanosine(37) in tRNA + S-adenosyl-L-methionine = N(1)-methylguanosine(37) in tRNA + S-adenosyl-L-homocysteine + H(+). In terms of biological role, specifically methylates guanosine-37 in various tRNAs. The protein is tRNA (guanine-N(1)-)-methyltransferase of Streptococcus pyogenes serotype M5 (strain Manfredo).